We begin with the raw amino-acid sequence, 344 residues long: Uroporphyrinogen decarboxylase (344 aa).

Substrate-binding positions include 24–28 (RQAGR), phenylalanine 43, aspartate 74, tyrosine 151, serine 206, and histidine 323.

Belongs to the uroporphyrinogen decarboxylase family. As to quaternary structure, homodimer.

The protein resides in the cytoplasm. It catalyses the reaction uroporphyrinogen III + 4 H(+) = coproporphyrinogen III + 4 CO2. The protein operates within porphyrin-containing compound metabolism; protoporphyrin-IX biosynthesis; coproporphyrinogen-III from 5-aminolevulinate: step 4/4. Its function is as follows. Catalyzes the decarboxylation of four acetate groups of uroporphyrinogen-III to yield coproporphyrinogen-III. The chain is Uroporphyrinogen decarboxylase from Rhodobacter capsulatus (Rhodopseudomonas capsulata).